A 719-amino-acid chain; its full sequence is Translation initiation factor IF-2 (719 aa).

Over residues asparagine 54–proline 67 the composition is skewed to basic and acidic residues. 2 disordered regions span residues asparagine 54–asparagine 75 and serine 97–asparagine 122. The span at lysine 109 to asparagine 122 shows a compositional bias: basic residues. One can recognise a tr-type G domain in the interval histidine 221–lysine 390. A G1 region spans residues glycine 230 to threonine 237. Glycine 230–threonine 237 contributes to the GTP binding site. Residues glycine 255 to histidine 259 are G2. The G3 stretch occupies residues aspartate 276–glycine 279. Residues aspartate 276–histidine 280 and asparagine 330–aspartate 333 contribute to the GTP site. Residues asparagine 330–aspartate 333 form a G4 region. Residues serine 366 to arginine 368 are G5.

The protein belongs to the TRAFAC class translation factor GTPase superfamily. Classic translation factor GTPase family. IF-2 subfamily.

The protein localises to the cytoplasm. Its function is as follows. One of the essential components for the initiation of protein synthesis. Protects formylmethionyl-tRNA from spontaneous hydrolysis and promotes its binding to the 30S ribosomal subunits. Also involved in the hydrolysis of GTP during the formation of the 70S ribosomal complex. The chain is Translation initiation factor IF-2 from Alkaliphilus oremlandii (strain OhILAs) (Clostridium oremlandii (strain OhILAs)).